Here is a 248-residue protein sequence, read N- to C-terminus: NADP-dependent 3-hydroxy acid dehydrogenase YdfG (248 aa).

Residues 7-12 (GATAGF), 32-33 (RR), 54-55 (DV), and Asn81 each bind NADP(+). Ser134 is a binding site for substrate. NADP(+)-binding positions include Tyr147, Lys151, and 177–185 (PGLVGGTEF). Tyr147 acts as the Proton acceptor in catalysis.

The protein belongs to the short-chain dehydrogenases/reductases (SDR) family. As to quaternary structure, homotetramer.

It carries out the reaction 3-hydroxypropanoate + NADP(+) = 3-oxopropanoate + NADPH + H(+). The enzyme catalyses L-allo-threonine + NADP(+) = aminoacetone + CO2 + NADPH. NADP-dependent dehydrogenase with broad substrate specificity acting on 3-hydroxy acids. Catalyzes the NADP-dependent oxidation of L-allo-threonine to L-2-amino-3-keto-butyrate, which is spontaneously decarboxylated into aminoacetone. Also acts on D-threonine, L-serine, D-serine, D-3-hydroxyisobutyrate, L-3-hydroxyisobutyrate, D-glycerate and L-glycerate. Able to catalyze the reduction of the malonic semialdehyde to 3-hydroxypropionic acid. YdfG is apparently supplementing RutE, the presumed malonic semialdehyde reductase involved in pyrimidine degradation since both are able to detoxify malonic semialdehyde. In Escherichia coli O6:H1 (strain CFT073 / ATCC 700928 / UPEC), this protein is NADP-dependent 3-hydroxy acid dehydrogenase YdfG.